Reading from the N-terminus, the 152-residue chain is Deoxyuridine 5'-triphosphate nucleotidohydrolase (152 aa).

Residues 71–73, Asn84, 88–90, and Met98 contribute to the substrate site; these read RSG and LID.

Belongs to the dUTPase family. The cofactor is Mg(2+).

The enzyme catalyses dUTP + H2O = dUMP + diphosphate + H(+). Its pathway is pyrimidine metabolism; dUMP biosynthesis; dUMP from dCTP (dUTP route): step 2/2. In terms of biological role, this enzyme is involved in nucleotide metabolism: it produces dUMP, the immediate precursor of thymidine nucleotides and it decreases the intracellular concentration of dUTP so that uracil cannot be incorporated into DNA. The protein is Deoxyuridine 5'-triphosphate nucleotidohydrolase of Shewanella piezotolerans (strain WP3 / JCM 13877).